The primary structure comprises 294 residues: Foldase protein PrsA 1 (294 aa).

The signal sequence occupies residues M1–G21. Residue C22 is the site of N-palmitoyl cysteine attachment. Residue C22 is the site of S-diacylglycerol cysteine attachment. Residues E135–K226 enclose the PpiC domain.

It belongs to the PrsA family.

The protein resides in the cell membrane. It carries out the reaction [protein]-peptidylproline (omega=180) = [protein]-peptidylproline (omega=0). Functionally, plays a major role in protein secretion by helping the post-translocational extracellular folding of several secreted proteins. This chain is Foldase protein PrsA 1 (prsA1), found in Listeria innocua serovar 6a (strain ATCC BAA-680 / CLIP 11262).